The following is a 580-amino-acid chain: Probable alpha-1,3-mannosyltransferase MNT4 (580 aa).

Topologically, residues 1 to 10 are cytoplasmic; that stretch reads MVLRIRRIKK. A helical; Signal-anchor for type II membrane protein transmembrane segment spans residues 11-29; that stretch reads LAPLIFTSLLSLIVLFRVY. Topologically, residues 30 to 580 are lumenal; that stretch reads RQYPFSDHFE…KVVELWNKVV (551 aa). 4 N-linked (GlcNAc...) asparagine glycosylation sites follow: asparagine 132, asparagine 167, asparagine 223, and asparagine 349.

The protein belongs to the MNN1/MNT family.

The protein resides in the membrane. This chain is Probable alpha-1,3-mannosyltransferase MNT4 (MNT4), found in Saccharomyces cerevisiae (strain ATCC 204508 / S288c) (Baker's yeast).